The chain runs to 638 residues: UvrABC system protein C (638 aa).

The 78-residue stretch at Glu20–Ile97 folds into the GIY-YIG domain. One can recognise a UVR domain in the interval Lys209–Val244.

It belongs to the UvrC family. In terms of assembly, interacts with UvrB in an incision complex.

Its subcellular location is the cytoplasm. The UvrABC repair system catalyzes the recognition and processing of DNA lesions. UvrC both incises the 5' and 3' sides of the lesion. The N-terminal half is responsible for the 3' incision and the C-terminal half is responsible for the 5' incision. The protein is UvrABC system protein C of Rickettsia canadensis (strain McKiel).